We begin with the raw amino-acid sequence, 98 residues long: Hainantoxin-XVII.3 (98 aa).

Positions 1–40 are cleaved as a signal peptide; the sequence is MTTVGVSLFRRSPEKITMKIATFLGLSFLLIASYFLICEA. Positions 41-64 are excised as a propeptide; that stretch reads QHPGFQELLILEENMRDPENSKER. Intrachain disulfides connect Cys-66/Cys-81, Cys-73/Cys-85, and Cys-80/Cys-95.

This sequence belongs to the hainantoxin family. 17 subfamily. In terms of tissue distribution, expressed by the venom gland.

Its subcellular location is the secreted. Inhibits with low potency Kv1.2/KCNA2 and Kv1.3/KCNA3 voltage-gated potassium channels. This Cyriopagopus hainanus (Chinese bird spider) protein is Hainantoxin-XVII.3.